The following is a 266-amino-acid chain: Potassium/proton antiporter CemA (266 aa).

3 consecutive transmembrane segments (helical) span residues Val-46 to Leu-66, Phe-151 to Leu-171, and Phe-226 to Ile-246.

This sequence belongs to the CemA family.

Its subcellular location is the plastid. It is found in the chloroplast inner membrane. It carries out the reaction K(+)(in) + H(+)(out) = K(+)(out) + H(+)(in). Contributes to K(+)/H(+) antiport activity by supporting proton efflux to control proton extrusion and homeostasis in chloroplasts in a light-dependent manner to modulate photosynthesis. Prevents excessive induction of non-photochemical quenching (NPQ) under continuous-light conditions. Indirectly promotes efficient inorganic carbon uptake into chloroplasts. This is Potassium/proton antiporter CemA from Chlorella vulgaris (Green alga).